A 458-amino-acid polypeptide reads, in one-letter code: Argininosuccinate lyase (458 aa).

This sequence belongs to the lyase 1 family. Argininosuccinate lyase subfamily.

The protein localises to the cytoplasm. It catalyses the reaction 2-(N(omega)-L-arginino)succinate = fumarate + L-arginine. It functions in the pathway amino-acid biosynthesis; L-arginine biosynthesis; L-arginine from L-ornithine and carbamoyl phosphate: step 3/3. The polypeptide is Argininosuccinate lyase (Salmonella paratyphi A (strain ATCC 9150 / SARB42)).